A 160-amino-acid chain; its full sequence is Transcriptional repressor NrdR (160 aa).

Positions 1-11 (MRCPNCNSLDT) are enriched in polar residues. The interval 1–20 (MRCPNCNSLDTQVKDSRPTE) is disordered. A zinc finger lies at 3-34 (CPNCNSLDTQVKDSRPTEDSSVIRRRRVCIAC). Residues 49–139 (LIVIKRNGRR…VYRNFREAKD (91 aa)) enclose the ATP-cone domain.

This sequence belongs to the NrdR family. Zn(2+) serves as cofactor.

Its function is as follows. Negatively regulates transcription of bacterial ribonucleotide reductase nrd genes and operons by binding to NrdR-boxes. The protein is Transcriptional repressor NrdR of Rhodopseudomonas palustris (strain ATCC BAA-98 / CGA009).